The primary structure comprises 240 residues: Putative glycyl-radical enzyme activating enzyme MJ1227 (240 aa).

The Radical SAM core domain maps to 14–232 (IDYPKKASAV…KKYIDNVVIR (219 aa)). 3 residues coordinate [4Fe-4S] cluster: Cys29, Cys33, and Cys36. Residues 35–37 (YCH), Gly71, and 126–128 (FDK) contribute to the S-adenosyl-L-methionine site.

This sequence belongs to the organic radical-activating enzymes family. [4Fe-4S] cluster serves as cofactor.

The enzyme catalyses glycyl-[protein] + reduced [flavodoxin] + S-adenosyl-L-methionine = glycin-2-yl radical-[protein] + semiquinone [flavodoxin] + 5'-deoxyadenosine + L-methionine + H(+). The protein is Putative glycyl-radical enzyme activating enzyme MJ1227 of Methanocaldococcus jannaschii (strain ATCC 43067 / DSM 2661 / JAL-1 / JCM 10045 / NBRC 100440) (Methanococcus jannaschii).